Here is a 256-residue protein sequence, read N- to C-terminus: Dihydromonacolin L-[lovastatin nonaketide synthase] thioesterase (256 aa).

Catalysis depends on charge relay system residues Ser-122, Asp-201, and His-229.

The protein belongs to the LovG family.

It carries out the reaction dihydromonacolin L-[lovastatin nonaketide synthase] + H2O = holo-[lovastatin nonaketide synthase] + dihydromonacolin L carboxylate + H(+). It functions in the pathway polyketide biosynthesis; lovastatin biosynthesis. Functionally, esterase; part of the gene cluster that mediates the biosynthesis of lovastatin (also known as mevinolin, mevacor or monacolin K), a hypolipidemic inhibitor of (3S)-hydroxymethylglutaryl-coenzyme A (HMG-CoA) reductase (HMGR). The first step in the biosynthesis of lovastatin is the production of dihydromonacolin L acid by the lovastatin nonaketide synthase lovB and the trans-acting enoyl reductase lovC via condensation of one acetyl-CoA unit and 8 malonyl-CoA units. Dihydromonacolin L acid is released from lovB by the thioesterase lovG. Next, dihydromonacolin L acid is oxidized by the dihydromonacolin L monooxygenase lovA twice to form monacolin J acid. The 2-methylbutyrate moiety of lovastatin is synthesized by the lovastatin diketide synthase lovF via condensation of one acetyl-CoA unit and one malonyl-CoA unit. Finally, the covalent attachment of this moiety to monacolin J acid is catalyzed by the transesterase lovD to yield lovastatin. LovD has broad substrate specificity and can also convert monacolin J to simvastatin using alpha-dimethylbutanoyl-S-methyl-3-mercaptopropionate (DMB-S-MMP) as the thioester acyl donor, and can also catalyze the reverse reaction and function as hydrolase in vitro. LovD has much higher activity with LovF-bound 2-methylbutanoate than with free diketide substrates. Its function is as follows. Esterase that catalyzes the release of covalently bound dihydromonacolin L from LovB during lovastatin biosynthesis. The protein is Dihydromonacolin L-[lovastatin nonaketide synthase] thioesterase of Aspergillus terreus.